We begin with the raw amino-acid sequence, 128 residues long: Cytochrome b (128 aa).

3 helical membrane-spanning segments follow: residues 25–45, 69–90, and 105–125; these read FGSM…FLAI, WIMQ…YIHI, and WLSG…XMCY. H75 and H89 together coordinate heme b. An a ubiquinone-binding site is contributed by H126.

It belongs to the cytochrome b family. As to quaternary structure, the cytochrome bc1 complex contains 3 respiratory subunits (MT-CYB, CYC1 and UQCRFS1), 2 core proteins (UQCRC1 and UQCRC2) and probably 6 low-molecular weight proteins. Requires heme b as cofactor.

The protein localises to the mitochondrion inner membrane. Its function is as follows. Component of the ubiquinol-cytochrome c reductase complex (complex III or cytochrome b-c1 complex) that is part of the mitochondrial respiratory chain. The b-c1 complex mediates electron transfer from ubiquinol to cytochrome c. Contributes to the generation of a proton gradient across the mitochondrial membrane that is then used for ATP synthesis. In Crotalus viridis viridis (Prairie rattlesnake), this protein is Cytochrome b (MT-CYB).